A 180-amino-acid polypeptide reads, in one-letter code: Regulator of G-protein signaling 8 (180 aa).

The residue at position 26 (serine 26) is a Phosphoserine. The 116-residue stretch at 56-171 (SFDVLLSHKY…FLRSKMYLDL (116 aa)) folds into the RGS domain.

As to quaternary structure, interacts with GNAO1 and GNAI3.

It localises to the cell membrane. The protein resides in the membrane. Its subcellular location is the perikaryon. It is found in the cell projection. The protein localises to the dendrite. It localises to the nucleus. Functionally, regulates G protein-coupled receptor signaling cascades, including signaling via muscarinic acetylcholine receptor CHRM2 and dopamine receptor DRD2. Inhibits signal transduction by increasing the GTPase activity of G protein alpha subunits, thereby driving them into their inactive GDP-bound form. Modulates the activity of potassium channels that are activated in response to DRD2 and CHRM2 signaling. This Mus musculus (Mouse) protein is Regulator of G-protein signaling 8 (Rgs8).